The primary structure comprises 406 residues: Putative colanic acid biosynthesis glycosyltransferase WcaL (406 aa).

It belongs to the glycosyltransferase group 1 family. Glycosyltransferase 4 subfamily.

Its pathway is slime biogenesis; slime polysaccharide biosynthesis. In Salmonella typhimurium (strain LT2 / SGSC1412 / ATCC 700720), this protein is Putative colanic acid biosynthesis glycosyltransferase WcaL (wcaL).